The primary structure comprises 360 residues: Lipid-A-disaccharide synthase (360 aa).

Belongs to the LpxB family.

The catalysed reaction is a lipid X + a UDP-2-N,3-O-bis[(3R)-3-hydroxyacyl]-alpha-D-glucosamine = a lipid A disaccharide + UDP + H(+). Its pathway is bacterial outer membrane biogenesis; LPS lipid A biosynthesis. Its function is as follows. Condensation of UDP-2,3-diacylglucosamine and 2,3-diacylglucosamine-1-phosphate to form lipid A disaccharide, a precursor of lipid A, a phosphorylated glycolipid that anchors the lipopolysaccharide to the outer membrane of the cell. This chain is Lipid-A-disaccharide synthase, found in Helicobacter pylori (strain G27).